A 64-amino-acid chain; its full sequence is Large ribosomal subunit protein bL35 (64 aa).

Over residues 1 to 26 the composition is skewed to basic residues; sequence MPKMKTKSAAAKRFKTTKSGKIKRKQ. Positions 1 to 46 are disordered; the sequence is MPKMKTKSAAAKRFKTTKSGKIKRKQAYTSHLAPNKTTKQKRHLRK.

This sequence belongs to the bacterial ribosomal protein bL35 family.

In Mycoplasmoides gallisepticum (strain R(low / passage 15 / clone 2)) (Mycoplasma gallisepticum), this protein is Large ribosomal subunit protein bL35.